The following is a 930-amino-acid chain: Translation initiation factor IF-2 (930 aa).

Residues 50–67 (FKPAAAPKVEAKPAAPKV) show a composition bias toward low complexity. Disordered regions lie at residues 50-195 (FKPA…PRID) and 260-346 (EVVP…HELP). 2 stretches are compositionally biased toward basic and acidic residues: residues 68-90 (SAEKKTEKSEPAKPAVAKEEAKP) and 110-125 (FKAEREARAKEQAERR). A compositionally biased stretch (low complexity) spans 129–141 (KGNNRDQQQNGNR). Basic and acidic residues-rich tracts occupy residues 157–167 (RDNRRFNDQAK) and 262–295 (VPEKKEPAVDTRRKKQARPDKNRDDYDHEEDGPR). Residues 309–318 (NQKNSNWNNN) show a composition bias toward low complexity. Residues 337-346 (VTERKFHELP) show a composition bias toward basic and acidic residues. Residues 432–599 (ERPPVVTIMG…TVLLVAEIQE (168 aa)) enclose the tr-type G domain. A G1 region spans residues 441-448 (GHVDHGKT). Residue 441 to 448 (GHVDHGKT) coordinates GTP. The interval 466-470 (GITQH) is G2. Positions 487-490 (DTPG) are G3. Residues 487-491 (DTPGH) and 541-544 (NKID) each bind GTP. Residues 541 to 544 (NKID) form a G4 region. The interval 577–579 (SAK) is G5.

The protein belongs to the TRAFAC class translation factor GTPase superfamily. Classic translation factor GTPase family. IF-2 subfamily.

The protein resides in the cytoplasm. One of the essential components for the initiation of protein synthesis. Protects formylmethionyl-tRNA from spontaneous hydrolysis and promotes its binding to the 30S ribosomal subunits. Also involved in the hydrolysis of GTP during the formation of the 70S ribosomal complex. The chain is Translation initiation factor IF-2 from Streptococcus pneumoniae (strain ATCC BAA-255 / R6).